Here is a 246-residue protein sequence, read N- to C-terminus: 3-deoxy-manno-octulosonate cytidylyltransferase (246 aa).

This sequence belongs to the KdsB family.

Its subcellular location is the cytoplasm. It carries out the reaction 3-deoxy-alpha-D-manno-oct-2-ulosonate + CTP = CMP-3-deoxy-beta-D-manno-octulosonate + diphosphate. Its pathway is nucleotide-sugar biosynthesis; CMP-3-deoxy-D-manno-octulosonate biosynthesis; CMP-3-deoxy-D-manno-octulosonate from 3-deoxy-D-manno-octulosonate and CTP: step 1/1. It participates in bacterial outer membrane biogenesis; lipopolysaccharide biosynthesis. Activates KDO (a required 8-carbon sugar) for incorporation into bacterial lipopolysaccharide in Gram-negative bacteria. The chain is 3-deoxy-manno-octulosonate cytidylyltransferase from Rickettsia akari (strain Hartford).